The chain runs to 893 residues: UPF0182 protein CLI_0022 (893 aa).

7 helical membrane passes run 9-29 (IPLFIIILFIAFFNKIINFII), 49-69 (AIIILMIPIFIIFFISIWMYY), 94-114 (LFFIFNFIVSIFLAYIFSSSY), 154-174 (VIISLLLFLVITTFIAYFILE), 202-222 (LAIVSGLIILFISFGHLIKIW), 246-266 (FYKIIVVITLISSIVTLLSIV), and 273-293 (VSICIGITIFLIVSQNIASFL).

This sequence belongs to the UPF0182 family.

It is found in the cell membrane. The polypeptide is UPF0182 protein CLI_0022 (Clostridium botulinum (strain Langeland / NCTC 10281 / Type F)).